The sequence spans 168 residues: ATP synthase subunit b (168 aa).

Residues 9–29 (AIPFGTIAYTLFIFLLLLVML) form a helical membrane-spanning segment.

Belongs to the ATPase B chain family. As to quaternary structure, F-type ATPases have 2 components, F(1) - the catalytic core - and F(0) - the membrane proton channel. F(1) has five subunits: alpha(3), beta(3), gamma(1), delta(1), epsilon(1). F(0) has three main subunits: a(1), b(2) and c(10-14). The alpha and beta chains form an alternating ring which encloses part of the gamma chain. F(1) is attached to F(0) by a central stalk formed by the gamma and epsilon chains, while a peripheral stalk is formed by the delta and b chains.

It localises to the cell membrane. In terms of biological role, f(1)F(0) ATP synthase produces ATP from ADP in the presence of a proton or sodium gradient. F-type ATPases consist of two structural domains, F(1) containing the extramembraneous catalytic core and F(0) containing the membrane proton channel, linked together by a central stalk and a peripheral stalk. During catalysis, ATP synthesis in the catalytic domain of F(1) is coupled via a rotary mechanism of the central stalk subunits to proton translocation. Component of the F(0) channel, it forms part of the peripheral stalk, linking F(1) to F(0). The sequence is that of ATP synthase subunit b from Bacillus cereus (strain ATCC 10987 / NRS 248).